The primary structure comprises 64 residues: Large ribosomal subunit protein uL29 (64 aa).

It belongs to the universal ribosomal protein uL29 family.

This Chloroherpeton thalassium (strain ATCC 35110 / GB-78) protein is Large ribosomal subunit protein uL29.